Here is a 157-residue protein sequence, read N- to C-terminus: Protein snakeskin (157 aa).

The Cytoplasmic portion of the chain corresponds to 2–6; it reads VSVQT. A helical membrane pass occupies residues 7 to 27; it reads IATIVVKTFKIVLNIIILVLY. Over 28–53 the chain is Extracellular; sequence RTGYNGEFLGVGGTWNLNEEKNPDAE. The helical transmembrane segment at 54–74 threads the bilayer; the sequence is IVASGVIVGYLIYTLVQIVTF. The Cytoplasmic portion of the chain corresponds to 75-87; sequence LFGTTEHKRALSE. A helical membrane pass occupies residues 88–108; the sequence is IVMNFVGVFLWIAVGAVALHY. The Extracellular segment spans residues 109-130; it reads WGGYQGEHQFQFVFAEKQVGLA. Residues 131-151 traverse the membrane as a helical segment; sequence VGALCVINGAIYLLDTALSVI. Residues 152 to 157 lie on the Cytoplasmic side of the membrane; it reads HFTKEM.

As to expression, expressed in midgut epithelium (at protein level).

The protein resides in the apicolateral cell membrane. The protein localises to the cell junction. Its subcellular location is the septate junction. Its function is as follows. Required for assembly of smooth septate junctions (sSJs). May be important for barrier function of the midgut epithelium. The sequence is that of Protein snakeskin from Bombyx mori (Silk moth).